A 228-amino-acid polypeptide reads, in one-letter code: ATP-dependent dethiobiotin synthetase BioD 1 (228 aa).

13 to 18 (EVGKTV) is an ATP binding site. Threonine 17 contacts Mg(2+). Lysine 38 is an active-site residue. Substrate is bound at residue serine 42. Residues aspartate 55, 116-119 (EGAG), 176-177 (ND), and 205-207 (PWL) contribute to the ATP site. Positions 55 and 116 each coordinate Mg(2+).

The protein belongs to the dethiobiotin synthetase family. Homodimer. Mg(2+) serves as cofactor.

The protein localises to the cytoplasm. It carries out the reaction (7R,8S)-7,8-diammoniononanoate + CO2 + ATP = (4R,5S)-dethiobiotin + ADP + phosphate + 3 H(+). It participates in cofactor biosynthesis; biotin biosynthesis; biotin from 7,8-diaminononanoate: step 1/2. Functionally, catalyzes a mechanistically unusual reaction, the ATP-dependent insertion of CO2 between the N7 and N8 nitrogen atoms of 7,8-diaminopelargonic acid (DAPA, also called 7,8-diammoniononanoate) to form a ureido ring. This is ATP-dependent dethiobiotin synthetase BioD 1 from Salmonella typhi.